A 208-amino-acid chain; its full sequence is 2-phospho-L-lactate guanylyltransferase (208 aa).

This sequence belongs to the CofC family. In terms of assembly, homodimer.

It carries out the reaction (2S)-2-phospholactate + GTP + H(+) = (2S)-lactyl-2-diphospho-5'-guanosine + diphosphate. It functions in the pathway cofactor biosynthesis; coenzyme F420 biosynthesis. Guanylyltransferase that catalyzes the activation of (2S)-2-phospholactate (2-PL) as (2S)-lactyl-2-diphospho-5'-guanosine, via the condensation of 2-PL with GTP. It is involved in the biosynthesis of coenzyme F420, a hydride carrier cofactor. The polypeptide is 2-phospho-L-lactate guanylyltransferase (Haloarcula marismortui (strain ATCC 43049 / DSM 3752 / JCM 8966 / VKM B-1809) (Halobacterium marismortui)).